The primary structure comprises 188 residues: U1 small nuclear ribonucleoprotein C-2 (188 aa).

The Matrin-type zinc finger occupies 4 to 36 (YYCDYCDVFLVSESPSVRKAHNSGRNHLTNVRD). Positions 57-188 (FETGGGNSTS…MNPDRARQLG (132 aa)) are disordered. A compositionally biased stretch (pro residues) spans 72–82 (GNPPGSQPGPP). A compositionally biased stretch (low complexity) spans 109–124 (AMLALMNGQNGMSSPG). Over residues 125-141 (SGPPPMRFAGPPIPNNM) the composition is skewed to pro residues.

The protein belongs to the U1 small nuclear ribonucleoprotein C family. U1 snRNP is composed of the 7 core Sm proteins B/B', D1, D2, D3, E, F and G that assemble in a heptameric protein ring on the Sm site of the small nuclear RNA to form the core snRNP, and at least 3 U1 snRNP-specific proteins U1-70K, U1-A and U1-C. U1-C interacts with U1 snRNA and the 5' splice-site region of the pre-mRNA.

It is found in the nucleus. Component of the spliceosomal U1 snRNP, which is essential for recognition of the pre-mRNA 5' splice-site and the subsequent assembly of the spliceosome. U1-C is directly involved in initial 5' splice-site recognition for both constitutive and regulated alternative splicing. The interaction with the 5' splice-site seems to precede base-pairing between the pre-mRNA and the U1 snRNA. Stimulates commitment or early (E) complex formation by stabilizing the base pairing of the 5' end of the U1 snRNA and the 5' splice-site region. In Puccinia graminis f. sp. tritici (strain CRL 75-36-700-3 / race SCCL) (Black stem rust fungus), this protein is U1 small nuclear ribonucleoprotein C-2.